The primary structure comprises 304 residues: Acetylglutamate kinase (304 aa).

Residues Gly-71 to Gly-72, Arg-93, and Asn-193 each bind substrate.

The protein belongs to the acetylglutamate kinase family. ArgB subfamily.

The protein resides in the cytoplasm. The enzyme catalyses N-acetyl-L-glutamate + ATP = N-acetyl-L-glutamyl 5-phosphate + ADP. It participates in amino-acid biosynthesis; L-arginine biosynthesis; N(2)-acetyl-L-ornithine from L-glutamate: step 2/4. In terms of biological role, catalyzes the ATP-dependent phosphorylation of N-acetyl-L-glutamate. In Streptomyces avermitilis (strain ATCC 31267 / DSM 46492 / JCM 5070 / NBRC 14893 / NCIMB 12804 / NRRL 8165 / MA-4680), this protein is Acetylglutamate kinase.